The primary structure comprises 810 residues: DNA replication licensing factor mcm-6 (810 aa).

Residues 346–553 (IEKNIVDSLF…VTDYAIARRI (208 aa)) enclose the MCM domain. ATP contacts are provided by serine 400, threonine 401, alanine 402, lysine 403, serine 404, and asparagine 505. The Arginine finger signature appears at 529 to 532 (SRFD). ADP is bound by residues arginine 622 and glutamate 625. A disordered region spans residues 685 to 705 (KENQGGDDDMEHDGEKDETAK).

It belongs to the MCM family. Component of the mcm2-7 complex. The complex forms a toroidal hexameric ring with the proposed subunit order mcm2-mcm6-mcm4-mcm7-mcm3-mcm5 (By simililarity).

It is found in the nucleus. The catalysed reaction is ATP + H2O = ADP + phosphate + H(+). Acts as a component of the MCM2-7 complex (MCM complex) which is the replicative helicase essential for 'once per cell cycle' DNA replication initiation and elongation in eukaryotic cells. Core component of CDC45-MCM-GINS (CMG) helicase, the molecular machine that unwinds template DNA during replication, and around which the replisome is built. The active ATPase sites in the MCM2-7 ring are formed through the interaction surfaces of two neighboring subunits such that a critical structure of a conserved arginine finger motif is provided in trans relative to the ATP-binding site of the Walker A box of the adjacent subunit. The six ATPase active sites, however, are likely to contribute differentially to the complex helicase activity. This is DNA replication licensing factor mcm-6 from Caenorhabditis briggsae.